The chain runs to 248 residues: Pyridoxine 5'-phosphate synthase (248 aa).

Residues asparagine 8 and arginine 19 each contribute to the 3-amino-2-oxopropyl phosphate site. The active-site Proton acceptor is histidine 44. Residues arginine 46 and histidine 51 each coordinate 1-deoxy-D-xylulose 5-phosphate. Glutamate 76 (proton acceptor) is an active-site residue. Threonine 106 lines the 1-deoxy-D-xylulose 5-phosphate pocket. Histidine 200 serves as the catalytic Proton donor. 3-amino-2-oxopropyl phosphate contacts are provided by residues aspartate 201 and 223 to 224 (GH).

This sequence belongs to the PNP synthase family. In terms of assembly, homooctamer; tetramer of dimers.

It is found in the cytoplasm. The enzyme catalyses 3-amino-2-oxopropyl phosphate + 1-deoxy-D-xylulose 5-phosphate = pyridoxine 5'-phosphate + phosphate + 2 H2O + H(+). It functions in the pathway cofactor biosynthesis; pyridoxine 5'-phosphate biosynthesis; pyridoxine 5'-phosphate from D-erythrose 4-phosphate: step 5/5. Its function is as follows. Catalyzes the complicated ring closure reaction between the two acyclic compounds 1-deoxy-D-xylulose-5-phosphate (DXP) and 3-amino-2-oxopropyl phosphate (1-amino-acetone-3-phosphate or AAP) to form pyridoxine 5'-phosphate (PNP) and inorganic phosphate. This is Pyridoxine 5'-phosphate synthase from Chelativorans sp. (strain BNC1).